Consider the following 1544-residue polypeptide: Arf-GAP with Rho-GAP domain, ANK repeat and PH domain-containing protein 3 (1544 aa).

One can recognise an SAM domain in the interval 4–68 (PQDLDIAVWL…LRLLQTGTEE (65 aa)). 2 disordered regions span residues 64 to 147 (TGTE…EQSS) and 167 to 194 (GRAQ…PTTG). Pro residues-rich tracts occupy residues 82–97 (SPSP…PVPK) and 130–139 (EPSPRPPPLP). PH domains are found at residues 287–379 (TPLL…SCLK) and 394–483 (RPLR…EAVT). Residues 480–611 (EAVTETLSDY…LFRKPHPQYP (132 aa)) form the Arf-GAP domain. Residues 504-527 (CADCGSSRPDWAAVNLGVVICKQC) form a C4-type zinc finger. Residues 907–1088 (TGLQEQQMSR…ELIDGYISVF (182 aa)) form the Rho-GAP domain. The region spanning 1117–1210 (GDLIMEVYIE…ASLLLKKVPL (94 aa)) is the Ras-associating domain. Positions 1223 to 1325 (ESPRVGLLRC…WTTSILKAQH (103 aa)) constitute a PH 3 domain. A Phosphothreonine modification is found at T1348. A phosphotyrosine mark is found at Y1403 and Y1408. The tract at residues 1422–1544 (STSFSTTREW…SSPPSSQPLT (123 aa)) is disordered. Residues 1438-1457 (PLTSQKSLDQPFLSKSSTLG) show a composition bias toward polar residues. Residues S1444 and S1480 each carry the phosphoserine modification. 2 stretches are compositionally biased toward low complexity: residues 1482 to 1492 (EEQLLQELSSL) and 1502 to 1527 (GLGS…TPGF).

As to quaternary structure, interacts (via SAM domain) with INPPL1/SHIP2. Post-translationally, tyrosine phosphorylated at a low basal level. PDGF treatment stimulates phosphorylation. Tyrosine phosphorylation is increased in cells that are in the process of becoming attached to a substrate and that start spreading and flattening.

The protein resides in the cytoplasm. It localises to the cytoskeleton. The protein localises to the cell membrane. Its subcellular location is the cell projection. It is found in the lamellipodium. The protein resides in the ruffle. Functionally, phosphatidylinositol 3,4,5-trisphosphate-dependent GTPase-activating protein that modulates actin cytoskeleton remodeling by regulating ARF and RHO family members. Is activated by phosphatidylinositol 3,4,5-trisphosphate (PtdIns(3,4,5)P3) binding. Can be activated by phosphatidylinositol 3,4-bisphosphate (PtdIns(3,4,5)P2) binding, albeit with lower efficiency. Acts on ARF6, RAC1, RHOA and CDC42. Plays a role in the internalization of anthrax toxin. In Homo sapiens (Human), this protein is Arf-GAP with Rho-GAP domain, ANK repeat and PH domain-containing protein 3 (ARAP3).